The primary structure comprises 358 residues: MNPFPRAEISSSALQTNLAALRQQAPASRVMAVVKANGYGHGLLNVANCLVSADGFGLARLDEALELRAGGVTARLLLLEGFFRATDLPLLVGHDIDTVVHHSSQLEMLEQTVLSKPVTVWLKVDSGMHRLGFTPEQFSTVYDRLMACPNVAKPIHLMTHFACADEPDNTYTSVQMAAFNSLTAGLPGFRTLANSAGALYWPQSQGDWIRPGIALYGVSPVTGDCGANHGLVPAMELVSQLIAVRDHKANQPVGYGCFWTAKQDTRLGVVAIGYGDGYPRNAPEGTPVWVNGRRVPIVGRVSMDMLTVDLGQDAQDKVGDSALLWGKALPVEEVAEHIGTIAYELVTKLTPRVAVCLA.

The Proton acceptor; specific for D-alanine role is filled by K35. An N6-(pyridoxal phosphate)lysine modification is found at K35. R130 lines the substrate pocket. The active-site Proton acceptor; specific for L-alanine is Y255. M303 serves as a coordination point for substrate.

The protein belongs to the alanine racemase family. Pyridoxal 5'-phosphate serves as cofactor.

It carries out the reaction L-alanine = D-alanine. Its pathway is amino-acid biosynthesis; D-alanine biosynthesis; D-alanine from L-alanine: step 1/1. Its function is as follows. Catalyzes the interconversion of L-alanine and D-alanine. May also act on other amino acids. The sequence is that of Alanine racemase (alr) from Shewanella baltica (strain OS155 / ATCC BAA-1091).